The sequence spans 155 residues: Small ribosomal subunit protein uS7cz/uS7cy (155 aa).

This sequence belongs to the universal ribosomal protein uS7 family. In terms of assembly, part of the 30S ribosomal subunit.

It is found in the plastid. It localises to the chloroplast. One of the primary rRNA binding proteins, it binds directly to 16S rRNA where it nucleates assembly of the head domain of the 30S subunit. The polypeptide is Small ribosomal subunit protein uS7cz/uS7cy (rps7-A) (Ceratophyllum demersum (Rigid hornwort)).